Consider the following 263-residue polypeptide: uncharacterized protein (263 aa).

The protein to B.subtilis soj.

This is an uncharacterized protein from Pseudomonas putida (strain ATCC 47054 / DSM 6125 / CFBP 8728 / NCIMB 11950 / KT2440).